A 546-amino-acid chain; its full sequence is Chaperonin GroEL (546 aa).

ATP is bound by residues 29–32 (TLGP), Lys50, 86–90 (DGTTT), Gly415, and Asp495. The tract at residues 526-546 (EDNAGGGGMPQGMGGGMPGMM) is disordered. Over residues 529–546 (AGGGGMPQGMGGGMPGMM) the composition is skewed to gly residues.

Belongs to the chaperonin (HSP60) family. As to quaternary structure, forms a cylinder of 14 subunits composed of two heptameric rings stacked back-to-back. Interacts with the co-chaperonin GroES.

Its subcellular location is the cytoplasm. It carries out the reaction ATP + H2O + a folded polypeptide = ADP + phosphate + an unfolded polypeptide.. Together with its co-chaperonin GroES, plays an essential role in assisting protein folding. The GroEL-GroES system forms a nano-cage that allows encapsulation of the non-native substrate proteins and provides a physical environment optimized to promote and accelerate protein folding. The sequence is that of Chaperonin GroEL from Christiangramia forsetii (strain DSM 17595 / CGMCC 1.15422 / KT0803) (Gramella forsetii).